Reading from the N-terminus, the 1425-residue chain is Ferlin 1 (1425 aa).

3 C2 domains span residues 1 to 123 (MAAK…RQWV), 161 to 281 (VNEG…PRWF), and 506 to 629 (TKAG…PVWL). The interval 871–952 (RPQASRLSRE…ALAASPEEET (82 aa)) is disordered. Composition is skewed to basic and acidic residues over residues 877-889 (LSRE…ERGK) and 912-926 (ETEK…KKEG). C2 domains follow at residues 1032–1160 (EMDA…EQMV) and 1192–1319 (RADY…QQHY). Residues 1404–1424 (TGVWMTVAGIIALVIFVMFLL) form a helical membrane-spanning segment.

Belongs to the ferlin family.

It is found in the golgi apparatus. The protein localises to the trans-Golgi network membrane. The protein resides in the endosome membrane. It localises to the cytoplasm. Plays a role in microneme replenishment, probably at the vesicular trafficking level. Directs microneme organelle traffic differentially based on microneme population. Regulates microneme secretion: facilitates microneme membrane fusion with the plasma membrane. This Toxoplasma gondii protein is Ferlin 1.